A 573-amino-acid chain; its full sequence is Heat shock protein 60A (573 aa).

The transit peptide at 1-57 directs the protein to the mitochondrion; that stretch reads MFRLPVSLARSSISRQLAMRGYAKDVRFGPEVRAMMLQGVDVLADAVAVTMGPKGRN.

This sequence belongs to the chaperonin (HSP60) family.

It localises to the mitochondrion matrix. Prevents misfolding and promotes the refolding and proper assembly of unfolded polypeptides generated under stress conditions. This Drosophila melanogaster (Fruit fly) protein is Heat shock protein 60A.